The following is a 183-amino-acid chain: Acireductone dioxygenase (183 aa).

Fe(2+) contacts are provided by His95, His97, Glu101, and His139. Residues His95, His97, Glu101, and His139 each contribute to the Ni(2+) site.

The protein belongs to the acireductone dioxygenase (ARD) family. In terms of assembly, monomer. The cofactor is Fe(2+). Requires Ni(2+) as cofactor.

The enzyme catalyses 1,2-dihydroxy-5-(methylsulfanyl)pent-1-en-3-one + O2 = 3-(methylsulfanyl)propanoate + CO + formate + 2 H(+). The catalysed reaction is 1,2-dihydroxy-5-(methylsulfanyl)pent-1-en-3-one + O2 = 4-methylsulfanyl-2-oxobutanoate + formate + 2 H(+). Its pathway is amino-acid biosynthesis; L-methionine biosynthesis via salvage pathway; L-methionine from S-methyl-5-thio-alpha-D-ribose 1-phosphate: step 5/6. In terms of biological role, catalyzes 2 different reactions between oxygen and the acireductone 1,2-dihydroxy-3-keto-5-methylthiopentene (DHK-MTPene) depending upon the metal bound in the active site. Fe-containing acireductone dioxygenase (Fe-ARD) produces formate and 2-keto-4-methylthiobutyrate (KMTB), the alpha-ketoacid precursor of methionine in the methionine recycle pathway. Ni-containing acireductone dioxygenase (Ni-ARD) produces methylthiopropionate, carbon monoxide and formate, and does not lie on the methionine recycle pathway. This chain is Acireductone dioxygenase, found in Hydrogenobaculum sp. (strain Y04AAS1).